The following is a 337-amino-acid chain: Eukaryotic translation initiation factor 3 subunit H (337 aa).

The 133-residue stretch at 21–153 (VQCDGLAVMK…LKAYRLTPQA (133 aa)) folds into the MPN domain.

Belongs to the eIF-3 subunit H family. Component of the eukaryotic translation initiation factor 3 (eIF-3) complex.

The protein resides in the cytoplasm. Functionally, component of the eukaryotic translation initiation factor 3 (eIF-3) complex, which is involved in protein synthesis of a specialized repertoire of mRNAs and, together with other initiation factors, stimulates binding of mRNA and methionyl-tRNAi to the 40S ribosome. The eIF-3 complex specifically targets and initiates translation of a subset of mRNAs involved in cell proliferation. This Bombyx mori (Silk moth) protein is Eukaryotic translation initiation factor 3 subunit H.